A 419-amino-acid polypeptide reads, in one-letter code: MAERLGILVGGGPAPGINSVISSVTIEAINNGLEVIGIYDGFKHLVEGKTNMVKKLSIEDVSRIHIEGGSILRTSRVNPAKSEETLEKTVQTLKKLGIKYLVTIGGDDTAFSASKVCERSKGEIKVVHVPKTIDNDLPLPENMPTFGFETARHVATELVYNLMQDSRTTNRWYFVAMMGREAGHLALGVGKAASATITIIPEEFKEGVTLEEVCDVLDGAILKRKLMGRDDGVAVIGEGIAEKMDPEELANIPGVIVEKDPHGHLRLAEIPLATILKRAIERRYAERGERIHIVDVTIGYELRSARPIPFDIVYTRTLGYGAVRFLLGDYSDLPGGMVCVVGGRIKILPFDAFMDPKTGRTKVRVVDVRSEDYRVARKYMIRLEKKDLEDPETLEKLAKLAKMEPEEFKKKYWHTTELP.

Position 12 (glycine 12) interacts with diphosphate. Residue aspartate 107 coordinates Mg(2+). Residues 132 to 134 (TID), 178 to 180 (MGR), glutamate 238, and 300 to 303 (YELR) contribute to the substrate site. The Proton acceptor role is filled by aspartate 134.

It belongs to the phosphofructokinase type A (PFKA) family. PPi-dependent PFK group II subfamily. Clade 'Short' sub-subfamily. In terms of assembly, homodimer. Requires Mg(2+) as cofactor. Co(2+) is required as a cofactor. It depends on Mn(2+) as a cofactor. The cofactor is Ni(2+).

The protein localises to the cytoplasm. It carries out the reaction beta-D-fructose 6-phosphate + diphosphate = beta-D-fructose 1,6-bisphosphate + phosphate + H(+). Its pathway is carbohydrate degradation; glycolysis; D-glyceraldehyde 3-phosphate and glycerone phosphate from D-glucose: step 3/4. Non-allosteric. Catalyzes the phosphorylation of D-fructose 6-phosphate, the first committing step of glycolysis. Uses inorganic phosphate (PPi) as phosphoryl donor instead of ATP like common ATP-dependent phosphofructokinases (ATP-PFKs), which renders the reaction reversible, and can thus function both in glycolysis and gluconeogenesis. Consistently, PPi-PFK can replace the enzymes of both the forward (ATP-PFK) and reverse (fructose-bisphosphatase (FBPase)) reactions. The chain is Pyrophosphate--fructose 6-phosphate 1-phosphotransferase from Thermotoga maritima (strain ATCC 43589 / DSM 3109 / JCM 10099 / NBRC 100826 / MSB8).